The chain runs to 386 residues: uncharacterized protein (386 aa).

Residues Pro355–Cys386 are disordered. Over residues His377–Cys386 the composition is skewed to basic residues.

This is an uncharacterized protein from Rickettsia prowazekii (strain Madrid E).